Consider the following 1025-residue polypeptide: Collagen alpha-1(VI) chain (1025 aa).

The signal sequence occupies residues 1-19 (MRLAHALLPLLLQACWVAT). Positions 20–255 (QDIQGSKAIA…CCSFECQAAR (236 aa)) are N-terminal globular domain. One can recognise a VWFA 1 domain in the interval 36-234 (DLFFVLDTSE…EVISQTIDTI (199 aa)). An N-linked (GlcNAc...) asparagine glycan is attached at Asn-211. The disordered stretch occupies residues 252–588 (QAARGPPGPR…QGPPGHVGPP (337 aa)). Residues 256 to 591 (GPPGPRGDPG…PGHVGPPGPD (336 aa)) form a triple-helical region region. A Cell attachment site motif is present at residues 261 to 263 (RGD). Composition is skewed to basic and acidic residues over residues 267–284 (EGER…EAGD) and 300–333 (KGEK…DGMK). Short sequence motifs (cell attachment site) lie at residues 441 to 443 (RGD) and 477 to 479 (RGD). N-linked (GlcNAc...) asparagine glycosylation is found at Asn-515 and Asn-536. A compositionally biased stretch (acidic residues) spans 549 to 559 (GEVGDPGEDNN). The segment covering 578 to 588 (PQGPPGHVGPP) has biased composition (pro residues). The segment at 592–1025 (ECEILDIIMK…QTVSRKVALG (434 aa)) is C-terminal globular domain. VWFA domains are found at residues 614–802 (DILF…LKNI) and 826–1018 (DITI…YQTV). N-linked (GlcNAc...) asparagine glycans are attached at residues Asn-801 and Asn-893.

Belongs to the type VI collagen family. In terms of assembly, trimers composed of three different chains: alpha-1(VI), alpha-2(VI), and alpha-3(VI) or alpha-4(VI) or alpha-5(VI) or alpha-6(VI). Prolines at the third position of the tripeptide repeating unit (G-X-Y) are hydroxylated in some or all of the chains.

It localises to the secreted. The protein localises to the extracellular space. Its subcellular location is the extracellular matrix. In terms of biological role, collagen VI acts as a cell-binding protein. The sequence is that of Collagen alpha-1(VI) chain (Col6a1) from Mus musculus (Mouse).